The primary structure comprises 421 residues: Inhibitor of growth protein 3 (421 aa).

Residues 129-163 (PSQPVNNHHAHSHTPVEKRKYNPTSHHAAADHIPE) are disordered. Glycyl lysine isopeptide (Lys-Gly) (interchain with G-Cter in SUMO2) cross-links involve residues lysine 148, lysine 165, and lysine 167. Residue lysine 181 is modified to N6-acetyllysine. Lysine 256 is covalently cross-linked (Glycyl lysine isopeptide (Lys-Gly) (interchain with G-Cter in SUMO2)). Lysine 264 carries the post-translational modification N6-acetyllysine. Over residues 286 to 296 (TQNASSSATDS) the composition is skewed to polar residues. Residues 286 to 323 (TQNASSSATDSRSGRKSKNNTKSSSQQSSSSSSSSSSS) are disordered. The segment covering 308-323 (SSSQQSSSSSSSSSSS) has biased composition (low complexity). The PHD-type zinc-finger motif lies at 363 to 412 (PRYCICNQVSYGEMVGCDNQDCPIEWFHYGCVGLTEAPKGKWFCPQCTAA). Zn(2+) contacts are provided by cysteine 366, cysteine 368, cysteine 379, cysteine 384, histidine 390, cysteine 393, cysteine 406, and cysteine 409.

Belongs to the ING family. Interacts with H3K4me3 and to a lesser extent with H3K4me2. Component of the NuA4 histone acetyltransferase complex which contains the catalytic subunit KAT5/TIP60 and the subunits EP400, TRRAP/PAF400, BRD8/SMAP, EPC1, DMAP1/DNMAP1, RUVBL1/TIP49, RUVBL2, ING3, actin, ACTL6A/BAF53A, MORF4L1/MRG15, MORF4L2/MRGX, MRGBP, YEATS4/GAS41, VPS72/YL1 and MEAF6. The NuA4 complex interacts with MYC. HTATTIP/TIP60, EPC1, and ING3 together constitute a minimal HAT complex termed Piccolo NuA4. Component of a SWR1-like complex.

Its subcellular location is the nucleus. Functionally, component of the NuA4 histone acetyltransferase (HAT) complex which is involved in transcriptional activation of select genes principally by acetylation of nucleosomal histones H4 and H2A. This modification may both alter nucleosome - DNA interactions and promote interaction of the modified histones with other proteins which positively regulate transcription. This complex may be required for the activation of transcriptional programs associated with oncogene and proto-oncogene mediated growth induction, tumor suppressor mediated growth arrest and replicative senescence, apoptosis, and DNA repair. NuA4 may also play a direct role in DNA repair when directly recruited to sites of DNA damage. Component of a SWR1-like complex that specifically mediates the removal of histone H2A.Z/H2AZ1 from the nucleosome. The polypeptide is Inhibitor of growth protein 3 (Ing3) (Mus musculus (Mouse)).